The primary structure comprises 340 residues: N-acetyl-gamma-glutamyl-phosphate reductase (340 aa).

Residue Cys-146 is part of the active site.

Belongs to the NAGSA dehydrogenase family. Type 1 subfamily.

The protein resides in the cytoplasm. It carries out the reaction N-acetyl-L-glutamate 5-semialdehyde + phosphate + NADP(+) = N-acetyl-L-glutamyl 5-phosphate + NADPH + H(+). The protein operates within amino-acid biosynthesis; L-arginine biosynthesis; N(2)-acetyl-L-ornithine from L-glutamate: step 3/4. Its function is as follows. Catalyzes the NADPH-dependent reduction of N-acetyl-5-glutamyl phosphate to yield N-acetyl-L-glutamate 5-semialdehyde. This Streptococcus thermophilus (strain CNRZ 1066) protein is N-acetyl-gamma-glutamyl-phosphate reductase.